Here is a 1378-residue protein sequence, read N- to C-terminus: Macrophage-stimulating protein receptor (1378 aa).

An N-terminal signal peptide occupies residues 1-23 (MGLPLPLLQSSLLLMLLLRLSAA). Residues 25–960 (TNLNWQCPRI…RSSPGRASQR (936 aa)) are Extracellular-facing. Residues 33-524 (RIPYAASRDF…SGDQVFKVPI (492 aa)) enclose the Sema domain. N-linked (GlcNAc...) asparagine glycosylation occurs at Asn91. 7 disulfides stabilise this stretch: Cys102-Cys105, Cys108-Cys163, Cys136-Cys144, Cys175-Cys178, Cys301-Cys368, Cys386-Cys409, and Cys387-Cys424. 3 N-linked (GlcNAc...) asparagine glycosylation sites follow: Asn391, Asn460, and Asn490. Intrachain disulfides connect Cys529/Cys547, Cys535/Cys569, Cys538/Cys554, and Cys550/Cys560. IPT/TIG domains lie at 571-673 (PEIS…FRVE), 686-769 (PVLT…FHYK), and 772-864 (PIVL…FRFL). N-linked (GlcNAc...) asparagine glycans are attached at residues Asn656, Asn722, Asn845, and Asn901. The helical transmembrane segment at 961–981 (ILLIALLVLILLVAVLAVALI) threads the bilayer. Residues 982–1378 (FNSRRRKKQL…RPLSEPPLPT (397 aa)) lie on the Cytoplasmic side of the membrane. A disordered region spans residues 1002–1026 (SDINDTASGAPNHEESSESRDGTSV). Positions 1013–1022 (NHEESSESRD) are enriched in basic and acidic residues. Positions 1059-1322 (IHTDQVIGKG…ALVLEVKQVV (264 aa)) constitute a Protein kinase domain. ATP contacts are provided by residues 1065 to 1073 (IGKGHFGVV), Lys1091, and 1138 to 1141 (LPYM). Residue Asp1185 is the Proton acceptor of the active site. Arg1189 lines the ATP pocket. Residues Tyr1215, Tyr1216, Tyr1330, and Tyr1337 each carry the phosphotyrosine; by autocatalysis modification. Residues 1347–1378 (DGSVPPEQVQPSPQHCRSTSKPRPLSEPPLPT) form a disordered region. The span at 1349–1360 (SVPPEQVQPSPQ) shows a compositional bias: low complexity.

Belongs to the protein kinase superfamily. Tyr protein kinase family. Heterodimer of an alpha chain and a beta chain which are disulfide linked. Binds PLXNB1. Associates with and is negatively regulated by HYAL2. Interacts when phosphorylated with downstream effectors including PIK3R1, PCLG1, GRB2 and GAB1. Interacts with integrin beta1/ITGB1 in a ligand-independent fashion. Isoform sf-Stk forms covalent heterodimers with friend spleen focus-forming virus (FSFFV) gp55. Post-translationally, proteolytic processing yields the two subunits. Autophosphorylated in response to ligand binding on Tyr-1215 and Tyr-1216 in the kinase domain leading to further phosphorylation of Tyr-1330 and Tyr-1337 in the C-terminal multifunctional docking site. In terms of processing, ubiquitinated. Ubiquitination by CBL regulates the receptor stability and activity through proteasomal degradation. Post-translationally, O-mannosylation of IPT/TIG domains on Thr or Ser residues by TMEM260 is required for protein maturation. O-mannosylated residues are composed of single mannose glycans that are not elongated or modified. In terms of tissue distribution, expressed in liver, skin, lung, brain, testis and kidney.

It localises to the membrane. The catalysed reaction is L-tyrosyl-[protein] + ATP = O-phospho-L-tyrosyl-[protein] + ADP + H(+). With respect to regulation, in its inactive state, the C-terminal tail interacts with the catalytic domain and inhibits the kinase activity. Upon ligand binding, the C-terminal tail is displaced and becomes phosphorylated, thus increasing the kinase activity. Receptor tyrosine kinase that transduces signals from the extracellular matrix into the cytoplasm by binding to MST1 ligand. Regulates many physiological processes including cell survival, migration and differentiation. Ligand binding at the cell surface induces autophosphorylation of RON on its intracellular domain that provides docking sites for downstream signaling molecules. Following activation by ligand, interacts with the PI3-kinase subunit PIK3R1, PLCG1 or the adapter GAB1. Recruitment of these downstream effectors by RON leads to the activation of several signaling cascades including the RAS-ERK, PI3 kinase-AKT, or PLCgamma-PKC. RON signaling activates the wound healing response by promoting epithelial cell migration, proliferation as well as survival at the wound site. Also plays a role in the innate immune response by regulating the migration and phagocytic activity of macrophages. Alternatively, RON can also promote signals such as cell migration and proliferation in response to growth factors other than MST1 ligand. This Mus musculus (Mouse) protein is Macrophage-stimulating protein receptor (Mst1r).